The chain runs to 214 residues: Tungstate uptake system ATP-binding protein TupC (214 aa).

The region spanning 3–214 (ITVSNLKKSY…GRVGEADGFF (212 aa)) is the ABC transporter domain. Residue 35 to 42 (GPNGAGKT) coordinates ATP.

Belongs to the ABC transporter superfamily. As to quaternary structure, the complex is composed of two ATP-binding proteins (TupC), two transmembrane proteins (TupB) and a solute-binding protein (TupA).

The catalysed reaction is tungstate(in) + ATP + H2O = tungstate(out) + ADP + phosphate + H(+). In terms of biological role, part of an ABC transporter complex involved in tungstate uptake. Probably responsible for energy coupling to the transport system. The chain is Tungstate uptake system ATP-binding protein TupC from Peptoclostridium acidaminophilum (Eubacterium acidaminophilum).